The primary structure comprises 35 residues: Photosystem II reaction center protein T (35 aa).

The chain crosses the membrane as a helical span at residues 3 to 23 (ALVYTFLLVSTLGIIFFAIFF).

The protein belongs to the PsbT family. As to quaternary structure, PSII is composed of 1 copy each of membrane proteins PsbA, PsbB, PsbC, PsbD, PsbE, PsbF, PsbH, PsbI, PsbJ, PsbK, PsbL, PsbM, PsbT, PsbY, PsbZ, Psb30/Ycf12, at least 3 peripheral proteins of the oxygen-evolving complex and a large number of cofactors. It forms dimeric complexes.

The protein localises to the plastid. Its subcellular location is the chloroplast thylakoid membrane. Functionally, found at the monomer-monomer interface of the photosystem II (PS II) dimer, plays a role in assembly and dimerization of PSII. PSII is a light-driven water plastoquinone oxidoreductase, using light energy to abstract electrons from H(2)O, generating a proton gradient subsequently used for ATP formation. In Amborella trichopoda, this protein is Photosystem II reaction center protein T.